The following is a 117-amino-acid chain: Large ribosomal subunit protein bL20 (117 aa).

This sequence belongs to the bacterial ribosomal protein bL20 family.

Functionally, binds directly to 23S ribosomal RNA and is necessary for the in vitro assembly process of the 50S ribosomal subunit. It is not involved in the protein synthesizing functions of that subunit. The chain is Large ribosomal subunit protein bL20 from Campylobacter hominis (strain ATCC BAA-381 / DSM 21671 / CCUG 45161 / LMG 19568 / NCTC 13146 / CH001A).